Reading from the N-terminus, the 78-residue chain is Small ribosomal subunit protein uS17 (78 aa).

This sequence belongs to the universal ribosomal protein uS17 family. As to quaternary structure, part of the 30S ribosomal subunit.

In terms of biological role, one of the primary rRNA binding proteins, it binds specifically to the 5'-end of 16S ribosomal RNA. The sequence is that of Small ribosomal subunit protein uS17 from Maricaulis maris (strain MCS10) (Caulobacter maris).